Reading from the N-terminus, the 532-residue chain is Glucose-6-phosphate isomerase (532 aa).

The active-site Proton donor is Glu330. Catalysis depends on residues His359 and Lys460.

The protein belongs to the GPI family.

It localises to the cytoplasm. It catalyses the reaction alpha-D-glucose 6-phosphate = beta-D-fructose 6-phosphate. It functions in the pathway carbohydrate biosynthesis; gluconeogenesis. Its pathway is carbohydrate degradation; glycolysis; D-glyceraldehyde 3-phosphate and glycerone phosphate from D-glucose: step 2/4. Functionally, catalyzes the reversible isomerization of glucose-6-phosphate to fructose-6-phosphate. This chain is Glucose-6-phosphate isomerase, found in Prochlorococcus marinus (strain MIT 9211).